The sequence spans 506 residues: 2-isopropylmalate synthase (506 aa).

The 263-residue stretch at 4 to 266 (ILFMDTTLRD…EPSMTLKEIK (263 aa)) folds into the Pyruvate carboxyltransferase domain. Residues D13, H201, H203, and N237 each contribute to the Mn(2+) site. A regulatory domain region spans residues 390-506 (NITQLQVHFV…KLKSFIQLVK (117 aa)).

Belongs to the alpha-IPM synthase/homocitrate synthase family. LeuA type 1 subfamily. As to quaternary structure, homodimer. The cofactor is Mn(2+).

The protein resides in the cytoplasm. The catalysed reaction is 3-methyl-2-oxobutanoate + acetyl-CoA + H2O = (2S)-2-isopropylmalate + CoA + H(+). The protein operates within amino-acid biosynthesis; L-leucine biosynthesis; L-leucine from 3-methyl-2-oxobutanoate: step 1/4. Its function is as follows. Catalyzes the condensation of the acetyl group of acetyl-CoA with 3-methyl-2-oxobutanoate (2-ketoisovalerate) to form 3-carboxy-3-hydroxy-4-methylpentanoate (2-isopropylmalate). The sequence is that of 2-isopropylmalate synthase from Bacillus cereus (strain 03BB102).